The chain runs to 424 residues: Tubulin-specific chaperone cofactor E-like protein (424 aa).

A phosphoserine mark is found at Ser18 and Ser41. 7 LRR repeats span residues 73–98 (CAHV…IVSN), 99–123 (VPQL…TCAG), 124–147 (SFSG…HTIL), 150–172 (LPDL…PSVC), 173–197 (CHSL…KLGV), 199–224 (FPSL…SLAR), and 226–250 (FPNL…KLNS). The 42-residue stretch at 262–303 (IPLLQPYTTEERRKLVVARLPSVSKLNGSVVTDGEREDSERF) folds into the LRRCT domain. The region spanning 334–424 (AEVDLRPQSS…DKIFVESKTK (91 aa)) is the Ubiquitin-like domain. Residues 350–375 (FNDQVEEVSIRLDQTVAELKRQLKTL) adopt a coiled-coil conformation.

The protein resides in the cytoplasm. The protein localises to the cytoskeleton. In terms of biological role, acts as a regulator of tubulin stability. This is Tubulin-specific chaperone cofactor E-like protein (Tbcel) from Rattus norvegicus (Rat).